We begin with the raw amino-acid sequence, 401 residues long: MDYMYGPGRHHLFVPGPVNIPEPVIRAMNRNNEDYRSPAIPALTKTLLEDVKKIFKTTSGTPFLFPTTGTGAWESALTNTLSPGDRIVSFLIGQFSLLWIDQQKRLNFNVDVVESDWGQGANLQVLASKLSQDENHTIKAICIVHNETATGVTNDISAVRTLLDHYKHPALLLVDGVSSICALDFRMDEWGVDVALTGSQKALSLPTGLGIVCASPKALEATKTSKSLKVFFDWNDYLKFYKLGTYWPYTPSIQLLYGLRAALDLIFEEGLENIIARHARLGKATRLAVEAWGLKNCTQKEEWISNTVTAVMVPPHIDGSEIVRRAWQRYNLSLGLGLNKVAGKVFRIGHLGNVNELQLLGCLAGVEMILKDVGYPVVMGSGVAAASTYLQHHIPLIPSRI.

Met-1 bears the N-acetylmethionine mark. Pyridoxal 5'-phosphate is bound by residues 68-70 (TGT), Thr-148, and 200-201 (QK). Lys-201 is a 3-hydroxypyruvate binding site. Lys-201 is modified (N6-(pyridoxal phosphate)lysine). Ser-204 carries the phosphoserine modification. Arg-347 provides a ligand contact to 3-hydroxypyruvate. The Microbody targeting signal motif lies at 399–401 (SRI).

This sequence belongs to the class-V pyridoxal-phosphate-dependent aminotransferase family. In terms of assembly, forms homodimers. Interacts with RABGAP22. Requires pyridoxal 5'-phosphate as cofactor. As to expression, widely expressed. Preferentially expressed in green, leafy tissues, root cortex and epidermis, developing siliques and dry seeds.

The protein resides in the peroxisome. It catalyses the reaction glyoxylate + L-serine = 3-hydroxypyruvate + glycine. The catalysed reaction is glyoxylate + L-alanine = glycine + pyruvate. It carries out the reaction L-serine + pyruvate = 3-hydroxypyruvate + L-alanine. The enzyme catalyses 3-hydroxypyruvate + L-asparagine = 2-oxosuccinamate + L-serine. It catalyses the reaction L-asparagine + glyoxylate = 2-oxosuccinamate + glycine. The catalysed reaction is L-asparagine + pyruvate = 2-oxosuccinamate + L-alanine. Inhibited by aminooxyacetate and beta-chloro-L-alanine, but not by p-hydroxymercuribenzoate. Functionally, photorespiratory enzyme that catalyzes transamination reactions with multiple substrates, including asparagine. Functions exclusively as a catabolic enzyme in Asn metabolism. Involved in root development during seedling establishment after seed germination by regulating serine homeostasis and acetate conversion. The sequence is that of Serine--glyoxylate aminotransferase from Arabidopsis thaliana (Mouse-ear cress).